Reading from the N-terminus, the 175-residue chain is Co-chaperone protein HscB homolog (175 aa).

The 73-residue stretch at 7 to 79 (SHFDLFDLPA…LKRATYLLHL (73 aa)) folds into the J domain.

Belongs to the HscB family. In terms of assembly, interacts with HscA and stimulates its ATPase activity.

Functionally, co-chaperone involved in the maturation of iron-sulfur cluster-containing proteins. Seems to help targeting proteins to be folded toward HscA. The sequence is that of Co-chaperone protein HscB homolog from Paraburkholderia xenovorans (strain LB400).